Reading from the N-terminus, the 328-residue chain is tRNA uridine(34) hydroxylase (328 aa).

Positions 130–224 (LDEDTIVLDT…YGKDPEVQGE (95 aa)) constitute a Rhodanese domain. The active-site Cysteine persulfide intermediate is the Cys184.

It belongs to the TrhO family.

It carries out the reaction uridine(34) in tRNA + AH2 + O2 = 5-hydroxyuridine(34) in tRNA + A + H2O. Its function is as follows. Catalyzes oxygen-dependent 5-hydroxyuridine (ho5U) modification at position 34 in tRNAs. The chain is tRNA uridine(34) hydroxylase from Streptococcus uberis (strain ATCC BAA-854 / 0140J).